A 462-amino-acid polypeptide reads, in one-letter code: Proline--tRNA ligase (462 aa).

It belongs to the class-II aminoacyl-tRNA synthetase family. ProS type 3 subfamily. Homodimer.

Its subcellular location is the cytoplasm. It catalyses the reaction tRNA(Pro) + L-proline + ATP = L-prolyl-tRNA(Pro) + AMP + diphosphate. In terms of biological role, catalyzes the attachment of proline to tRNA(Pro) in a two-step reaction: proline is first activated by ATP to form Pro-AMP and then transferred to the acceptor end of tRNA(Pro). The polypeptide is Proline--tRNA ligase (Thermoplasma acidophilum (strain ATCC 25905 / DSM 1728 / JCM 9062 / NBRC 15155 / AMRC-C165)).